The sequence spans 186 residues: Elongation factor P (186 aa).

This sequence belongs to the elongation factor P family.

Its subcellular location is the cytoplasm. It functions in the pathway protein biosynthesis; polypeptide chain elongation. In terms of biological role, involved in peptide bond synthesis. Stimulates efficient translation and peptide-bond synthesis on native or reconstituted 70S ribosomes in vitro. Probably functions indirectly by altering the affinity of the ribosome for aminoacyl-tRNA, thus increasing their reactivity as acceptors for peptidyl transferase. The chain is Elongation factor P from Prochlorococcus marinus (strain MIT 9313).